A 591-amino-acid polypeptide reads, in one-letter code: DEAD-box ATP-dependent RNA helicase 17 (591 aa).

The Q motif signature appears at 23 to 52; that stretch reads CSFTDLGLHPTLCAHLQDKMGFQAPTRIQA. Residues 55-248 form the Helicase ATP-binding domain; that stretch reads IPVAMSGQHM…KISLKNPVMI (194 aa). 68–75 lines the ATP pocket; the sequence is AATGTGKT. The short motif at 181 to 184 is the DEAD box element; sequence DEAD. Residues 293–482 form the Helicase C-terminal domain; sequence QLVQRYVKVS…SFPVNGQRLH (190 aa). Residues 562-591 are disordered; sequence GRSHQVQLKKRKKEQKRERPAKRRKIPAKR. Basic residues predominate over residues 568 to 591; it reads QLKKRKKEQKRERPAKRRKIPAKR.

It belongs to the DEAD box helicase family. DDX31/DBP7 subfamily. In terms of tissue distribution, expressed in flowers and pollen grains.

The protein resides in the nucleus. The catalysed reaction is ATP + H2O = ADP + phosphate + H(+). In terms of biological role, may play a role in organellar ribosome biogenesis and suppress 16S rRNA maturation. This is DEAD-box ATP-dependent RNA helicase 17 from Oryza sativa subsp. japonica (Rice).